Here is a 343-residue protein sequence, read N- to C-terminus: MREPGFWYRPPSLLSSLLRPLGAIYGAVAAHRMAQPGTAVGVPVLCIGNFHGGGAGKTPTALALARLLLELGERPVVLSRGYGGRLHGPVSVDPGRHGAADVGDEPLMMARDIPVVVARDRVAGAALARSRGASVILMDDGFQNPAVAKDAALIVIDGDRGLGNGYVIPAGPLRAPLPPQLARTDALIVVGRGRAADPVAAAVKDNGGLLLRARFLPAEASLAALCDRPVLAFAGIGDPARFFATLRTAGINVAAERVFADHHPYAKQDLAGLTEIAGRDGFTLVTTEKDLARLRSDPAHAAFARSVVPFAVTLEFDDAKALRDFVIEKLTQARDKHRRAGRS.

51-58 serves as a coordination point for ATP; it reads HGGGAGKT.

Belongs to the LpxK family.

It catalyses the reaction a lipid A disaccharide + ATP = a lipid IVA + ADP + H(+). Its pathway is glycolipid biosynthesis; lipid IV(A) biosynthesis; lipid IV(A) from (3R)-3-hydroxytetradecanoyl-[acyl-carrier-protein] and UDP-N-acetyl-alpha-D-glucosamine: step 6/6. Its function is as follows. Transfers the gamma-phosphate of ATP to the 4'-position of a tetraacyldisaccharide 1-phosphate intermediate (termed DS-1-P) to form tetraacyldisaccharide 1,4'-bis-phosphate (lipid IVA). This Rhodopseudomonas palustris (strain BisB18) protein is Tetraacyldisaccharide 4'-kinase.